Reading from the N-terminus, the 205-residue chain is Putative 3-methyladenine DNA glycosylase (205 aa).

Belongs to the DNA glycosylase MPG family.

The polypeptide is Putative 3-methyladenine DNA glycosylase (Clostridium acetobutylicum (strain ATCC 824 / DSM 792 / JCM 1419 / IAM 19013 / LMG 5710 / NBRC 13948 / NRRL B-527 / VKM B-1787 / 2291 / W)).